The following is a 276-amino-acid chain: Glutamate 5-kinase (276 aa).

Residue K14 participates in ATP binding. Substrate-binding residues include S54, D141, and N157. ATP contacts are provided by residues 177-178 and 219-225; these read SD and TGGMLTK.

It belongs to the glutamate 5-kinase family.

It is found in the cytoplasm. It catalyses the reaction L-glutamate + ATP = L-glutamyl 5-phosphate + ADP. It functions in the pathway amino-acid biosynthesis; L-proline biosynthesis; L-glutamate 5-semialdehyde from L-glutamate: step 1/2. Functionally, catalyzes the transfer of a phosphate group to glutamate to form L-glutamate 5-phosphate. The chain is Glutamate 5-kinase from Listeria innocua serovar 6a (strain ATCC BAA-680 / CLIP 11262).